The primary structure comprises 847 residues: Alpha-glucuronidase A (847 aa).

Positions 1 to 22 (MRSFLLLTALLGVAAVAEDGLA) are cleaved as a signal peptide. N-linked (GlcNAc...) asparagine glycosylation is found at Asn-48, Asn-78, Asn-227, Asn-315, Asn-349, Asn-457, Asn-472, Asn-534, Asn-583, Asn-689, Asn-738, Asn-739, and Asn-769.

The protein belongs to the glycosyl hydrolase 67 family.

Its subcellular location is the secreted. It catalyses the reaction an alpha-D-glucuronoside + H2O = D-glucuronate + an alcohol. Functionally, alpha-glucuronidase involved in the hydrolysis of xylan, a major structural heterogeneous polysaccharide found in plant biomass representing the second most abundant polysaccharide in the biosphere, after cellulose. Releases 4-O-methylglucuronic acid from xylan. The polypeptide is Alpha-glucuronidase A (aguA) (Emericella nidulans (strain FGSC A4 / ATCC 38163 / CBS 112.46 / NRRL 194 / M139) (Aspergillus nidulans)).